We begin with the raw amino-acid sequence, 560 residues long: Nibrin homolog (560 aa).

One can recognise an FHA domain in the interval 25–87; sequence YKVGRKDCDV…YGTFFNKVQG (63 aa). In terms of domain architecture, BRCT spans 115-190; the sequence is TFRLSFVPIV…KQIVLGDWFK (76 aa).

It belongs to the Nibrin family. As to quaternary structure, component of the MRN complex composed of two heterodimers RAD50 and MRE11 associated with a single NBS1. Mostly expressed in the shoot apex and young flower, but also in young leaves, root tips and stamen, tissues where frequent cell division or meiosis may occur.

It localises to the nucleus. Its subcellular location is the chromosome. Its function is as follows. Component of the MRN complex, which plays a central role in double-strand break (DSB) repair, DNA recombination, maintenance of telomere integrity and meiosis. The MRN complex is involved in the repair of DNA double-strand breaks (DSBs) via homologous recombination (HR), an error-free mechanism which primarily occurs during S and G2 phases. The complex (1) mediates the end resection of damaged DNA, which generates proper single-stranded DNA, a key initial steps in HR, and is (2) required for the recruitment of other repair factors and efficient activation of ATM and ATR upon DNA damage. The MRN complex possesses single-strand endonuclease activity and double-strand-specific 3'-5' exonuclease activity, which are provided by MRE11, to initiate end resection, which is required for single-strand invasion and recombination. Within the MRN complex, NBS1 acts as a protein-protein adapter, which specifically recognizes and binds phosphorylated proteins, promoting their recruitment to DNA damage sites. Recruits MRE11 and RAD50 components of the MRN complex to DSBs in response to DNA damage. This Oryza sativa subsp. japonica (Rice) protein is Nibrin homolog.